We begin with the raw amino-acid sequence, 307 residues long: Thioredoxin reductase (307 aa).

Residue 34 to 41 (ESKAHGGQ) participates in FAD binding. A disulfide bridge links cysteine 134 with cysteine 137. Residue 275 to 284 (DVRAKSFRQV) coordinates FAD.

The protein belongs to the class-II pyridine nucleotide-disulfide oxidoreductase family. As to quaternary structure, homodimer. Requires FAD as cofactor.

It localises to the cytoplasm. It carries out the reaction [thioredoxin]-dithiol + NADP(+) = [thioredoxin]-disulfide + NADPH + H(+). The protein is Thioredoxin reductase (trxB) of Treponema pallidum (strain Nichols).